The chain runs to 311 residues: 4-hydroxy-tetrahydrodipicolinate synthase (311 aa).

Residue threonine 49 participates in pyruvate binding. Residue tyrosine 138 is the Proton donor/acceptor of the active site. Lysine 166 functions as the Schiff-base intermediate with substrate in the catalytic mechanism. Isoleucine 207 is a pyruvate binding site.

It belongs to the DapA family. As to quaternary structure, homotetramer; dimer of dimers.

The protein resides in the cytoplasm. It catalyses the reaction L-aspartate 4-semialdehyde + pyruvate = (2S,4S)-4-hydroxy-2,3,4,5-tetrahydrodipicolinate + H2O + H(+). The protein operates within amino-acid biosynthesis; L-lysine biosynthesis via DAP pathway; (S)-tetrahydrodipicolinate from L-aspartate: step 3/4. In terms of biological role, catalyzes the condensation of (S)-aspartate-beta-semialdehyde [(S)-ASA] and pyruvate to 4-hydroxy-tetrahydrodipicolinate (HTPA). This chain is 4-hydroxy-tetrahydrodipicolinate synthase, found in Limosilactobacillus fermentum (strain NBRC 3956 / LMG 18251) (Lactobacillus fermentum).